A 58-amino-acid polypeptide reads, in one-letter code: Large ribosomal subunit protein bL32 (58 aa).

Belongs to the bacterial ribosomal protein bL32 family.

The chain is Large ribosomal subunit protein bL32 from Synechococcus sp. (strain WH7803).